Here is a 227-residue protein sequence, read N- to C-terminus: DNA repair protein RecO (227 aa).

This sequence belongs to the RecO family.

Involved in DNA repair and RecF pathway recombination. The chain is DNA repair protein RecO from Pseudomonas putida (strain ATCC 700007 / DSM 6899 / JCM 31910 / BCRC 17059 / LMG 24140 / F1).